Here is a 222-residue protein sequence, read N- to C-terminus: Cytidylate kinase (222 aa).

7–15 (GPAGAGKST) lines the ATP pocket.

The protein belongs to the cytidylate kinase family. Type 1 subfamily.

The protein resides in the cytoplasm. It catalyses the reaction CMP + ATP = CDP + ADP. It carries out the reaction dCMP + ATP = dCDP + ADP. The protein is Cytidylate kinase of Carboxydothermus hydrogenoformans (strain ATCC BAA-161 / DSM 6008 / Z-2901).